Here is a 330-residue protein sequence, read N- to C-terminus: MNNLFSSSWKRTGGGGGGDGDIESGGGVEMAPPPGAAAGASLDRFFEDVESIKDELRDLERIQRSLHDANEGGKSLHDAAAVRALRARMDADVAAAIKKAKVVKLRLESLDRANAANRSVPGCGPGSSTDRTRTSVVAGLRKKLRDSMESFSSLRARISSEYRETVARRYYTVTGEQPDEATLDNLAETGEGERFLQRAIAEQGRGEVLGVVAEIQERHGAVAELERSLLELHQVFNDMAVLVAAQGEQLDDIETHVGRARSFVDRGREQLVVARKHQKSTRKWTCIAIIILLVLILVVVLPIVLKFVNNNKSSSSSPAPATPSPPPPTA.

The segment covering 1–10 (MNNLFSSSWK) has biased composition (polar residues). A disordered region spans residues 1 to 39 (MNNLFSSSWKRTGGGGGGDGDIESGGGVEMAPPPGAAAG). The Cytoplasmic segment spans residues 1–284 (MNNLFSSSWK…RKHQKSTRKW (284 aa)). The segment covering 12-28 (TGGGGGGDGDIESGGGV) has biased composition (gly residues). One can recognise a t-SNARE coiled-coil homology domain in the interval 212–274 (VAEIQERHGA…DRGREQLVVA (63 aa)). Residues 285 to 305 (TCIAIIILLVLILVVVLPIVL) form a helical; Anchor for type IV membrane protein membrane-spanning segment. Residues 306 to 330 (KFVNNNKSSSSSPAPATPSPPPPTA) lie on the Vesicular side of the membrane. The segment at 311-330 (NKSSSSSPAPATPSPPPPTA) is disordered. Residues 320–330 (PATPSPPPPTA) are compositionally biased toward pro residues.

This sequence belongs to the syntaxin family. In terms of assembly, interacts with SNAP32. Expressed in roots, stems, leaf blades and leaf sheaths.

It localises to the cell membrane. Vesicle trafficking protein that functions in the secretory pathway. Involved in plant defense by mediating host resistance to the rice blast fungus Magnaporthe oryzae. The interaction with SNAP32 may contribute to host resistance to the rice blast fungus. This Oryza sativa subsp. japonica (Rice) protein is Syntaxin-121.